A 179-amino-acid polypeptide reads, in one-letter code: Large ribosomal subunit protein uL5 (179 aa).

The protein belongs to the universal ribosomal protein uL5 family. As to quaternary structure, part of the 50S ribosomal subunit; part of the 5S rRNA/L5/L18/L25 subcomplex. Contacts the 5S rRNA and the P site tRNA. Forms a bridge to the 30S subunit in the 70S ribosome.

In terms of biological role, this is one of the proteins that bind and probably mediate the attachment of the 5S RNA into the large ribosomal subunit, where it forms part of the central protuberance. In the 70S ribosome it contacts protein S13 of the 30S subunit (bridge B1b), connecting the 2 subunits; this bridge is implicated in subunit movement. Contacts the P site tRNA; the 5S rRNA and some of its associated proteins might help stabilize positioning of ribosome-bound tRNAs. This Neisseria gonorrhoeae (strain ATCC 700825 / FA 1090) protein is Large ribosomal subunit protein uL5.